The following is a 339-amino-acid chain: Cathepsin B (339 aa).

The first 17 residues, M1 to A17, serve as a signal peptide directing secretion. Residues R18–K79 constitute a propeptide, activation peptide. Cystine bridges form between C93/C122, C105/C150, C141/C207, C142/C146, C179/C211, and C187/C198. Residue C108 is part of the active site. N-linked (GlcNAc...) asparagine glycosylation occurs at N192. K220 is subject to N6-acetyllysine. Active-site residues include H278 and N298. The propeptide occupies Q334 to I339.

This sequence belongs to the peptidase C1 family. In terms of assembly, dimer of a heavy chain and a light chain cross-linked by a disulfide bond. Interacts with SRPX2. Directly interacts with SHKBP1.

The protein localises to the lysosome. It localises to the melanosome. The protein resides in the secreted. Its subcellular location is the extracellular space. It is found in the apical cell membrane. The catalysed reaction is Hydrolysis of proteins with broad specificity for peptide bonds. Preferentially cleaves -Arg-Arg-|-Xaa bonds in small molecule substrates (thus differing from cathepsin L). In addition to being an endopeptidase, shows peptidyl-dipeptidase activity, liberating C-terminal dipeptides.. Its function is as follows. Thiol protease which is believed to participate in intracellular degradation and turnover of proteins. Cleaves matrix extracellular phosphoglycoprotein MEPE. Involved in the solubilization of cross-linked TG/thyroglobulin in the thyroid follicle lumen. Has also been implicated in tumor invasion and metastasis. This Pongo abelii (Sumatran orangutan) protein is Cathepsin B (CTSB).